Consider the following 359-residue polypeptide: Peroxisome assembly protein 12 (359 aa).

Over 1-19 (MAEYGAHITTASVADDQPS) the chain is Peroxisomal matrix. A helical membrane pass occupies residues 20–47 (IFEVVAQDSLMTAVRPALQHVVKVLAES). At 48–51 (NPAH) the chain is on the cytoplasmic side. Residues 52 to 76 (YGFLWRWFDEIFTLLDFLLQQHYLS) form a helical membrane-spanning segment. The Peroxisomal matrix portion of the chain corresponds to 77 to 109 (RTSASFSEHFYGLKRIVAGSSPHLQRPASAGLP). A helical membrane pass occupies residues 110–139 (KEHLWKSAMFLVLLPYLKVKLEKLASSLRE). Residues 140-144 (EDEYS) are Cytoplasmic-facing. A helical membrane pass occupies residues 145–183 (IHPPSSRWKRFYRAFLAAYPFVNMAWEGWFLTQQLRYIL). Residues 184–249 (GKAEHHSPLL…VGGVALSLST (66 aa)) are Peroxisomal matrix-facing. Residues 250-277 (GLSVGVFFLQFLDWWYSSENQEAIKSLT) traverse the membrane as a helical segment. The Cytoplasmic segment spans residues 278–359 (ALPTPPPPVH…HLIKLYSPEN (82 aa)). Residues C304, C307, C325, and C328 each coordinate Zn(2+). Residues 304–343 (CPLCRKTRVNDTVLATSGYVFCYRCVFNYVRSHQACPITG) form an RING-type; degenerate zinc finger.

This sequence belongs to the pex2/pex10/pex12 family. Component of the PEX2-PEX10-PEX12 retrotranslocation channel, composed of PEX2, PEX10 and PEX12. Interacts with PEX19 via its cytoplasmic domain.

Its subcellular location is the peroxisome membrane. It functions in the pathway protein modification; protein ubiquitination. Component of a retrotranslocation channel required for peroxisome organization by mediating export of the PEX5 receptor from peroxisomes to the cytosol, thereby promoting PEX5 recycling. The retrotranslocation channel is composed of PEX2, PEX10 and PEX12; each subunit contributing transmembrane segments that coassemble into an open channel that specifically allows the passage of PEX5 through the peroxisomal membrane. PEX12 also regulates PEX5 recycling by activating the E3 ubiquitin-protein ligase activity of PEX10. When PEX5 recycling is compromised, PEX12 stimulates PEX10-mediated polyubiquitination of PEX5, leading to its subsequent degradation. The protein is Peroxisome assembly protein 12 (Pex12) of Mus musculus (Mouse).